The chain runs to 236 residues: 7-cyano-7-deazaguanine synthase (236 aa).

7 to 17 is a binding site for ATP; the sequence is CSGGLDSVSLA. Residues Cys-185, Cys-193, Cys-196, and Cys-199 each coordinate Zn(2+).

It belongs to the QueC family. Zn(2+) serves as cofactor.

The enzyme catalyses 7-carboxy-7-deazaguanine + NH4(+) + ATP = 7-cyano-7-deazaguanine + ADP + phosphate + H2O + H(+). Its pathway is purine metabolism; 7-cyano-7-deazaguanine biosynthesis. In terms of biological role, catalyzes the ATP-dependent conversion of 7-carboxy-7-deazaguanine (CDG) to 7-cyano-7-deazaguanine (preQ(0)). In Rhizobium leguminosarum bv. trifolii (strain WSM2304), this protein is 7-cyano-7-deazaguanine synthase.